Reading from the N-terminus, the 121-residue chain is Large ribosomal subunit protein uL18 (121 aa).

It belongs to the universal ribosomal protein uL18 family. As to quaternary structure, part of the 50S ribosomal subunit; part of the 5S rRNA/L5/L18/L25 subcomplex. Contacts the 5S and 23S rRNAs.

In terms of biological role, this is one of the proteins that bind and probably mediate the attachment of the 5S RNA into the large ribosomal subunit, where it forms part of the central protuberance. This Dehalococcoides mccartyi (strain ATCC BAA-2266 / KCTC 15142 / 195) (Dehalococcoides ethenogenes (strain 195)) protein is Large ribosomal subunit protein uL18.